We begin with the raw amino-acid sequence, 207 residues long: D-aminoacyl-tRNA deacylase 1 (207 aa).

The Gly-cisPro motif, important for rejection of L-amino acids motif lies at 139-140 (GP). Residues 142 to 207 (TIQLESPPAP…EGDVSSEREP (66 aa)) form a disordered region. Composition is skewed to basic and acidic residues over residues 156–167 (LLSKQEKQQQRK) and 178–189 (SSREKAAQRSKV).

This sequence belongs to the DTD family. As to quaternary structure, homodimer.

Its subcellular location is the cytoplasm. It carries out the reaction a D-aminoacyl-tRNA + H2O = a tRNA + a D-alpha-amino acid + H(+). The catalysed reaction is glycyl-tRNA(Ala) + H2O = tRNA(Ala) + glycine + H(+). In terms of biological role, D-aminoacyl-tRNA deacylase, with no observable activity on tRNAs charged with their cognate L-amino acid. Hydrolyzes correctly charged, achiral, glycyl-tRNA(Gly). Deacylates mischarged D.melanogaster and E.coli glycyl-tRNA(Ala), protecting cells against glycine mischarging by AlaRS. Acts via tRNA-based rather than protein-based catalysis; rejects L-amino acids rather than detecting D-amino acids in the active site. By recycling D-aminoacyl-tRNA to D-amino acids and free tRNA molecules, this enzyme counteracts the toxicity associated with the formation of D-aminoacyl-tRNA entities in vivo and helps enforce protein L-homochirality. The polypeptide is D-aminoacyl-tRNA deacylase 1 (Danio rerio (Zebrafish)).